The chain runs to 172 residues: Shikimate kinase (172 aa).

14 to 19 (GAGKST) contacts ATP. Ser-18 contributes to the Mg(2+) binding site. Residues Asp-36, Arg-60, and Gly-82 each contribute to the substrate site. ATP is bound at residue Arg-120. Substrate is bound at residue Arg-139. Gln-156 provides a ligand contact to ATP.

It belongs to the shikimate kinase family. As to quaternary structure, monomer. It depends on Mg(2+) as a cofactor.

It localises to the cytoplasm. The enzyme catalyses shikimate + ATP = 3-phosphoshikimate + ADP + H(+). It participates in metabolic intermediate biosynthesis; chorismate biosynthesis; chorismate from D-erythrose 4-phosphate and phosphoenolpyruvate: step 5/7. In terms of biological role, catalyzes the specific phosphorylation of the 3-hydroxyl group of shikimic acid using ATP as a cosubstrate. The polypeptide is Shikimate kinase (Aliivibrio salmonicida (strain LFI1238) (Vibrio salmonicida (strain LFI1238))).